Reading from the N-terminus, the 458-residue chain is Neuronal acetylcholine receptor subunit beta-3 (458 aa).

A signal peptide spans 1 to 21; sequence MLPDFMLVLIVLGIPSSATTG. Residues 22–237 lie on the Extracellular side of the membrane; the sequence is FNSIAENEDA…VLRRLPLFYT (216 aa). N-linked (GlcNAc...) asparagine glycans are attached at residues Asn-51, Asn-138, and Asn-166. The cysteines at positions 153 and 167 are disulfide-linked. Helical transmembrane passes span 238-258, 267-287, and 300-320; these read LFLI…FYLP, LSTS…EIIP, and LLFI…VINV. Topologically, residues 321–428 are cytoplasmic; it reads HHRSSSTYHP…WKFVAQVLDR (108 aa). A helical membrane pass occupies residues 429–449; the sequence is IFLWLFLIVSVTGSVLIFTPA.

This sequence belongs to the ligand-gated ion channel (TC 1.A.9) family. Acetylcholine receptor (TC 1.A.9.1) subfamily. Beta-3/CHRNB3 sub-subfamily. As to quaternary structure, neuronal AChR seems to be composed of two different type of subunits: alpha and beta. CHRNB3/beta-3 subunit is only able to form functional nAChRs when co-assembled with another beta subunit. Participates in pentameric assemblies along with CHRNA4/alpha-4 and CHRNB2/beta-2 subunits and with CHRNA6/alpha-6 as well, forming stoichiometries such as (CHRNA3:CHRNB4)2:CHRNB3, (CHRNA4:CHRNB2)2:CHRNB3 or (CHRNA6:CHRNB2)2:CHRNB3.

It localises to the synaptic cell membrane. Its subcellular location is the cell membrane. It catalyses the reaction Ca(2+)(in) = Ca(2+)(out). The catalysed reaction is K(+)(in) = K(+)(out). The enzyme catalyses Na(+)(in) = Na(+)(out). Its activity is regulated as follows. Activated by a myriad of ligands such as acetylcholine, cytisine, nicotine, choline and epibatidine. Its function is as follows. Component of neuronal acetylcholine receptors (nAChRs) that function as pentameric, ligand-gated cation channels with high calcium permeability among other activities. nAChRs are excitatory neurotrasnmitter receptors formed by a collection of nAChR subunits known to mediate synaptic transmission in the nervous system and the neuromuscular junction. Each nAchR subunit confers differential attributes to channel properties, including activation, deactivation and desensitization kinetics, pH sensitivity, cation permeability, and binding to allosteric modulators. Has an accessory rather than functional role and is only able to form functional nAChRs when co-assembled with another beta subunit. Participates in pentameric assemblies along with CHRNA3, CHRNA4, CHRNA6, CHRNB2 and CHRNB4. Modulates receptor assembly and increases receptor sensitivity to nicotine when associated with CHRNB2, CHRNA4 and/or CHRNA6 as well as CHRNA3 and CHRNB4. Seems to play a role in nicotine addiction. This is Neuronal acetylcholine receptor subunit beta-3 from Homo sapiens (Human).